Here is a 755-residue protein sequence, read N- to C-terminus: Cartilage oligomeric matrix protein (755 aa).

A signal peptide spans 1–19; that stretch reads MSPTACVLVLALAALRATG. A COMP N-terminal region spans residues 21 to 84; that stretch reads GQIPLGGDLA…PARTPGLSVR (64 aa). One can recognise an EGF-like 1 domain in the interval 85-124; it reads PVALCAPGSCFPGVVCTETATGARCGPCPPGYTGNGSHCT. Intrachain disulfides connect Cys89–Cys100, Cys94–Cys109, Cys112–Cys123, Cys129–Cys140, Cys134–Cys149, Cys152–Cys176, Cys182–Cys195, Cys189–Cys204, Cys207–Cys219, Cys227–Cys241, Cys235–Cys251, Cys253–Cys264, Cys280–Cys285, Cys290–Cys310, Cys326–Cys346, Cys349–Cys369, Cys385–Cys405, Cys408–Cys428, Cys446–Cys466, Cys482–Cys502, and Cys518–Cys739. The N-linked (GlcNAc...) asparagine glycan is linked to Asn119. In terms of domain architecture, EGF-like 2; calcium-binding spans 125-177; that stretch reads DVNECNAHPCFPRVRCINTSPGFHCEACPPGFSGPTHEGVGLTFAKTNKQVCT. The 43-residue stretch at 178-220 folds into the EGF-like 3; calcium-binding domain; sequence DINECETGQHNCVPNSVCVNTRGSFQCGPCQPGFVGDQRSGCQ. Residues 223-265 enclose the EGF-like 4 domain; it reads GQHFCPDGSPSPCHEKADCILERDGSRSCVCAVGWAGNGLLCG. 8 TSP type-3 repeats span residues 266–298, 299–334, 335–357, 358–393, 394–416, 417–454, 455–490, and 491–526; these read RDTD…NSGQ, EDVD…NPDQ, RNSD…NDDQ, KDTD…NFDQ, SDSD…NPDQ, RDVD…NSAQ, QDSD…NPGQ, and EDND…EVTL. The segment at 295–501 is disordered; it reads NSGQEDVDRD…DNDRDGVGDA (207 aa). Basic and acidic residues-rich tracts occupy residues 332 to 344 and 350 to 365; these read PDQR…KWGD and RSQK…RDGQ. Ser394 is subject to Phosphoserine. Basic and acidic residues-rich tracts occupy residues 412 to 424 and 456 to 465; these read DNPD…HDFV and DSDHDGKGDA. The interval 525 to 755 is mediates cell survival and induction of the IAP family of survival proteins; that stretch reads TLTDFRAFQT…DYERHRLRRA (231 aa). Residues 530–744 form the TSP C-terminal domain; the sequence is RAFQTVVLDP…LRYRCNDTIP (215 aa). The N-linked (GlcNAc...) asparagine glycan is linked to Asn740.

It belongs to the thrombospondin family. Pentamer; disulfide-linked. Exists in a more compact conformation in the presence of calcium and shows a more extended conformation in the absence of calcium. Interacts with ITGB3, ITGA5 and FN1. Binding to FN1 requires the presence of divalent cations (Ca(2+), Mg(2+) or Mn(2+)). The greatest amount of binding is seen in the presence of Mn(2+). Interacts with MATN1, MATN3, MATN4 and ACAN. Binds heparin, heparan sulfate and chondroitin sulfate. EDTA dimishes significantly its binding to ACAN and abolishes its binding to MATN3, MATN4 and chondroitin sulfate. Interacts with collagen I, II and IX, and interaction with these collagens is dependent on the presence of zinc ions. Interacts with ADAMTS12. Interacts with ITGA7. It depends on Ca(2+) as a cofactor. In terms of processing, proteolytically cleaved by metalloproteases ADAMTS4 and ADAMTS1 with ADAMTS4 showing more potent activity.

The protein resides in the secreted. Its subcellular location is the extracellular space. It is found in the extracellular matrix. Its function is as follows. Plays a role in the structural integrity of cartilage via its interaction with other extracellular matrix proteins such as the collagens and fibronectin. Can mediate the interaction of chondrocytes with the cartilage extracellular matrix through interaction with cell surface integrin receptors. Could play a role in the pathogenesis of osteoarthritis. Potent suppressor of apoptosis in both primary chondrocytes and transformed cells. Suppresses apoptosis by blocking the activation of caspase-3 and by inducing the IAP family of survival proteins (BIRC3, BIRC2, BIRC5 and XIAP). Essential for maintaining a vascular smooth muscle cells (VSMCs) contractile/differentiated phenotype under physiological and pathological stimuli. Maintains this phenotype of VSMCs by interacting with ITGA7. The sequence is that of Cartilage oligomeric matrix protein from Rattus norvegicus (Rat).